We begin with the raw amino-acid sequence, 545 residues long: Sterol O-acyltransferase 1 (545 aa).

Met-1 carries the post-translational modification N-acetylmethionine. Positions 1–24 (MVGEETSLRNRLSRSAENPEQDEA) are disordered. At 1–133 (MVGEETSLRN…LDELFEVDHI (133 aa)) the chain is on the cytoplasmic side. Position 7 is a phosphoserine (Ser-7). A compositionally biased stretch (polar residues) spans 9–18 (RNRLSRSAEN). His-132 serves as a coordination point for cholesterol. Residues 134–155 (RTIYHMFIALLIIFILSTLVVD) traverse the membrane as a helical segment. The Lumenal portion of the chain corresponds to 156–175 (YIDEGRLVLEFSLLAYAFGQ). The helical transmembrane segment at 176–201 (FPIVIWTWWAMFLSTLAIPYFLFQRW) threads the bilayer. The Cytoplasmic segment spans residues 202 to 213 (AHGYSKSSHPLI). A helical membrane pass occupies residues 214–239 (YSLIHGAFFLVFQLGILGFIPTYVVL). Residues 240–247 (AYTLPPAS) are Lumenal-facing. Residues 248–271 (RFILILEQIRLVMKAHSYVRENVP) form a helical membrane-spanning segment. Residues 272–314 (RVLSAAKEKSSTVPVPTVNQYLYFLFAPTLIYRDSYPRTPTVR) are Cytoplasmic-facing. A helical membrane pass occupies residues 315–347 (WGYVAMQFLQVFGCLFYVYYIFERLCAPLFRNI). Topologically, residues 348-364 (KQEPFSARVLVLCVFNS) are lumenal. A helical transmembrane segment spans residues 365 to 390 (ILPGVLMLFLSFFAFLHCWLNAFAEM). Topologically, residues 391 to 438 (LRFGDRMFYKDWWNSTSYSNYYRTWNVVVHDWLYYYVYKDLLWFFSKR) are cytoplasmic. An FYXDWWN motif motif is present at residues 398–404 (FYKDWWN). Residues Asn-410, Arg-413, Asn-416, His-420, Tyr-428, and Ser-451 each coordinate an acyl-CoA. A helical membrane pass occupies residues 439-463 (FRPAAMLAVFALSAVVHEYALAVCL). The active site involves His-455. Topologically, residues 464–469 (SYFYPV) are lumenal. Residues 470 to 485 (LFVLFMFFGMAFNFIV) traverse the membrane as a helical segment. Topologically, residues 486–491 (NDSRKR) are cytoplasmic. Residues 492 to 523 (PVWNIMVRASLFLGHGVILCFYSQEWYARQRC) form a helical membrane-spanning segment. Cys-523 and Cys-541 are joined by a disulfide. Residues 524–545 (PLKNPTFLDYVRPRTWTCRYVF) are Lumenal-facing.

Belongs to the membrane-bound acyltransferase family. Sterol o-acyltransferase subfamily. As to quaternary structure, may form homo- or heterodimers. Interacts with UBIAD1.

Its subcellular location is the endoplasmic reticulum membrane. The catalysed reaction is a sterol + a long-chain fatty acyl-CoA = a long-chain 3-hydroxysterol ester + CoA. The enzyme catalyses cholesterol + an acyl-CoA = a cholesterol ester + CoA. It catalyses the reaction cholesterol + (9Z)-octadecenoyl-CoA = cholesteryl (9Z-octadecenoate) + CoA. It carries out the reaction cholesterol + hexadecanoyl-CoA = cholesteryl hexadecanoate + CoA. The catalysed reaction is octadecanoyl-CoA + cholesterol = cholesteryl octadecanoate + CoA. The enzyme catalyses (9Z,12Z)-octadecadienoyl-CoA + cholesterol = cholesteryl (9Z,12Z)-octadecadienoate + CoA. It catalyses the reaction (5Z,8Z,11Z,14Z)-eicosatetraenoyl-CoA + cholesterol = cholesteryl (5Z,8Z,11Z,14Z)-eicosatetraenoate + CoA. It carries out the reaction (9Z)-hexadecenoyl-CoA + cholesterol = cholesteryl (9Z)-hexadecenoate + CoA. The catalysed reaction is (11Z)-octadecenoyl-CoA + cholesterol = cholesteryl (11Z)-octadecenoate + CoA. The enzyme catalyses (7Z)-octadecenoyl-CoA + cholesterol = cholesteryl (7Z)-octadecenoate + CoA. Catalyzes the formation of fatty acid-cholesterol esters, which are less soluble in membranes than cholesterol. Plays a role in lipoprotein assembly and dietary cholesterol absorption. Preferentially utilizes oleoyl-CoA ((9Z)-octadecenoyl-CoA) as substrate: shows a higher activity towards an acyl-CoA substrate with a double bond at the delta-9 position (9Z) than towards saturated acyl-CoA or an unsaturated acyl-CoA with a double bond at the delta-7 (7Z) or delta-11 (11Z) positions. The polypeptide is Sterol O-acyltransferase 1 (Rattus norvegicus (Rat)).